The primary structure comprises 746 residues: Tudor domain-containing protein krimp (746 aa).

An involved in homooligomerization region spans residues 1 to 310 (MNLEDISMIM…RDIYNQILKD (310 aa)). The non-canonical tudor domain stretch occupies residues 311 to 489 (MAAFPENTIV…PAGITEDDMA (179 aa)). Residues 511 to 540 (KDEQRICRHYDPKLNGCFKGNNCRFAHEPF) form a C3H1-type zinc finger. In terms of domain architecture, Tudor spans 613-670 (KPRLLDIVLALYSDGCFYRAQIIDEFPSEYMIFYVDYGNTEFVPLSCLAPCENVDSFK).

It belongs to the Tudor domain containing protein family. As to quaternary structure, homooligomerizes (via N-terminus). Component of the ping-pong piRNA processing (4P) complex consisting of krimp, aub and AGO3; a single molecule of krimp can bind both aub and AGO3 without the need for homooligomerization. Interacts (via canonical tudor domain) with aub (via N-terminus when symmetrically dimethylated on arginine residues). Interacts (via non-canonical tudor domain) with AGO3 (via N-terminus when unmethylated on arginine residues); this interaction leads to symmetrical dimethylation on AGO3 arginine residues and its subsequent dissociation from krimp. Krimp associated AGO3 is mostly free of piRNA binding and the interaction plays an important role in the loading of AGO3 with piRNAs; piRNA binding stimulates methylation of ACO3 by the csul/PRMT5 methylosome complex and promotes dissociation of the two proteins. Widely expressed in female germline cells, including differentiating germ cells in germarium and egg chambers (at protein level).

The protein resides in the cytoplasm. Its subcellular location is the perinuclear region. It localises to the cytoplasmic ribonucleoprotein granule. Stable structural component of the perinuclear meiotic nuage, a germline-specific subcellular membraneless ribonucleoprotein compartment involved in production of transposable element-repressing Piwi-interacting RNA (piRNA)-induced silencing complexes (piRISCs), which are essential for maintaining germline integrity during oogenesis. Scaffold component of the ping-pong piRNA processing (4P) complex that recruits the Piwi proteins aub and AGO3 to specific subregions of the nuage where it coordinates their activity in the ping-pong amplification step of secondary piRNA biogenesis. Binds methylated aub, which is associated with piRNA, and unmethylated AGO3, which is not associated with piRNA, bringing the Piwi proteins into close proximity and facilitating the loading of freshly cut piRNAs generated by aub onto AGO3. Promotes asymmetric ping-pong amplification by aub and AGO3 to bias production towards antisense piRNAs capable of silencing transposable elements. Required for symmetrical dimethylation of AGO3, probably by recruitment to the nuage where methylosome components are located; dimethylation promotes AGO3 dissociation and interaction with other tudor-domain containing proteins such as tud. Required for the recruitment of mael to the perinuclear meiotic nuage. Required for the recruitment of aub to the nuage in testes but not in ovaries. Involved in repression of long interspersed nuclear elements (LINEs) including HeT-A, I-element LINEs and possibly mst40, but not TART LINEs. The sequence is that of Tudor domain-containing protein krimp from Drosophila melanogaster (Fruit fly).